The sequence spans 185 residues: uncharacterized protein (185 aa).

This is an uncharacterized protein from Acanthamoeba polyphaga (Amoeba).